We begin with the raw amino-acid sequence, 563 residues long: Inositol-3-phosphate synthase 1-B (563 aa).

This sequence belongs to the myo-inositol 1-phosphate synthase family. The cofactor is NAD(+).

It is found in the cytoplasm. It catalyses the reaction D-glucose 6-phosphate = 1D-myo-inositol 3-phosphate. The protein operates within polyol metabolism; myo-inositol biosynthesis; myo-inositol from D-glucose 6-phosphate: step 1/2. In terms of biological role, key enzyme in myo-inositol biosynthesis pathway that catalyzes the conversion of glucose 6-phosphate to 1-myo-inositol 1-phosphate in a NAD-dependent manner. Rate-limiting enzyme in the synthesis of all inositol-containing compounds. This chain is Inositol-3-phosphate synthase 1-B (isyna1-b), found in Xenopus laevis (African clawed frog).